We begin with the raw amino-acid sequence, 218 residues long: Ribose-5-phosphate isomerase A (218 aa).

Residues 28–31 (TGST), 81–84 (DGAD), and 94–97 (KGGG) contribute to the substrate site. The Proton acceptor role is filled by E103. Residue K121 participates in substrate binding.

It belongs to the ribose 5-phosphate isomerase family. As to quaternary structure, homodimer.

The enzyme catalyses aldehydo-D-ribose 5-phosphate = D-ribulose 5-phosphate. Its pathway is carbohydrate degradation; pentose phosphate pathway; D-ribose 5-phosphate from D-ribulose 5-phosphate (non-oxidative stage): step 1/1. Catalyzes the reversible conversion of ribose-5-phosphate to ribulose 5-phosphate. This is Ribose-5-phosphate isomerase A from Pseudoalteromonas atlantica (strain T6c / ATCC BAA-1087).